Here is a 490-residue protein sequence, read N- to C-terminus: UDP-N-acetylmuramate--L-alanine ligase (490 aa).

122 to 128 is an ATP binding site; sequence GTHGKTS.

It belongs to the MurCDEF family.

It localises to the cytoplasm. It catalyses the reaction UDP-N-acetyl-alpha-D-muramate + L-alanine + ATP = UDP-N-acetyl-alpha-D-muramoyl-L-alanine + ADP + phosphate + H(+). It participates in cell wall biogenesis; peptidoglycan biosynthesis. Its function is as follows. Cell wall formation. In Mycobacteroides abscessus (strain ATCC 19977 / DSM 44196 / CCUG 20993 / CIP 104536 / JCM 13569 / NCTC 13031 / TMC 1543 / L948) (Mycobacterium abscessus), this protein is UDP-N-acetylmuramate--L-alanine ligase.